Here is a 422-residue protein sequence, read N- to C-terminus: Roquefortine prenyltransferase roqD (422 aa).

Residue Glu100 coordinates substrate. Dimethylallyl diphosphate-binding residues include Arg113, Lys200, and Tyr202. Residue Tyr204 coordinates substrate. Dimethylallyl diphosphate is bound by residues Lys268, Tyr270, Tyr353, Tyr416, and Tyr420.

The protein belongs to the tryptophan dimethylallyltransferase family.

Its pathway is alkaloid biosynthesis. Functionally, roquefortine prenyltransferase; part of the gene cluster that mediates the biosynthesis of the mycotoxins roquefortine C and meleagrin. The first stage is catalyzed by the dipeptide synthase roqA which condenses histidine and tryptophan to produce histidyltryptophanyldiketopiperazine (HTD). HTD is then converted to roquefortine C through two possible pathways. In the first pathway, prenyltransferase roqD transforms HTD to the intermediate roquefortine D, which is in turn converted to roquefortine C by the cytochrome P450 monooxygenase roqR. In the second pathway, HTD is first converted to the intermediate dehydrohistidyltryptophanyldi-ketopiperazine (DHTD) by roqR which is then prenylated by roqD to form roquefortine C. Roquefortine C can be further transformed to meleagrin via three more reactions including oxydation to glandicolin A by roqM, which is further reduced to glandicoline B by roqO. Finally, glandicoline B is converted to meleagrin by the glandicoline B O-methyltransferase roqN. More studies identified further branching and additional metabolites produced by the roquefortine/meleagrin cluster, including roquefortine F, roquefortine L, roquefortine M, roquefortine N and neoxaline. The chain is Roquefortine prenyltransferase roqD from Penicillium rubens (strain ATCC 28089 / DSM 1075 / NRRL 1951 / Wisconsin 54-1255) (Penicillium chrysogenum).